Consider the following 212-residue polypeptide: 3-isopropylmalate dehydratase small subunit (212 aa).

The protein belongs to the LeuD family. LeuD type 1 subfamily. In terms of assembly, heterodimer of LeuC and LeuD.

It catalyses the reaction (2R,3S)-3-isopropylmalate = (2S)-2-isopropylmalate. The protein operates within amino-acid biosynthesis; L-leucine biosynthesis; L-leucine from 3-methyl-2-oxobutanoate: step 2/4. Functionally, catalyzes the isomerization between 2-isopropylmalate and 3-isopropylmalate, via the formation of 2-isopropylmaleate. The sequence is that of 3-isopropylmalate dehydratase small subunit from Beutenbergia cavernae (strain ATCC BAA-8 / DSM 12333 / CCUG 43141 / JCM 11478 / NBRC 16432 / NCIMB 13614 / HKI 0122).